The chain runs to 478 residues: Phosphomannomutase (478 aa).

A helical membrane pass occupies residues 30–46 (FTPEVCARFTISFLTVM). Ser111 acts as the Phosphoserine intermediate in catalysis. The Mg(2+) site is built by Ser111, Asp245, Asp247, and Asp249. The helical transmembrane segment at 265-284 (ILGLLCSLELAADAVAIPVS) threads the bilayer.

This sequence belongs to the phosphohexose mutase family. Requires Mg(2+) as cofactor.

The protein localises to the cell membrane. It catalyses the reaction alpha-D-mannose 1-phosphate = D-mannose 6-phosphate. Its pathway is nucleotide-sugar biosynthesis; GDP-alpha-D-mannose biosynthesis; alpha-D-mannose 1-phosphate from D-fructose 6-phosphate: step 2/2. The protein operates within bacterial outer membrane biogenesis; LPS O-antigen biosynthesis. In terms of biological role, involved in GDP-mannose biosynthesis which serves as the activated sugar nucleotide precursor for mannose residues in cell surface polysaccharides. This enzyme participates in synthesis of the LPS group C2 O antigen. The protein is Phosphomannomutase (manB) of Salmonella muenchen.